Consider the following 60-residue polypeptide: Phycobilisome degradation protein NblA homolog 2 (60 aa).

This sequence to Synechococcus PCC 7942 NblA and some, to chloroplast ycf18.

This is Phycobilisome degradation protein NblA homolog 2 from Synechocystis sp. (strain ATCC 27184 / PCC 6803 / Kazusa).